A 173-amino-acid polypeptide reads, in one-letter code: MANPAQPPLQDPGSTSPLELPEMEKLLTKVENKDDQALNLSKSLSGALDLEQNGHSLPFKVISEGHRQPSLSGSPSRVSSRRASSVITTSYAQDQEAPKDYLVLAIASCFCPVWPLNLIPLIFSIMSRSSVQQGDLDGARRLGRLARLLSITFIILGIVIIIVAVTVNFTVPK.

The span at 1–10 shows a compositional bias: pro residues; the sequence is MANPAQPPLQ. The tract at residues 1-20 is disordered; it reads MANPAQPPLQDPGSTSPLEL. Residues 1-102 are Cytoplasmic-facing; the sequence is MANPAQPPLQ…QDQEAPKDYL (102 aa). Residues Ser-16, Ser-43, Ser-45, Ser-70, Ser-84, and Ser-85 each carry the phosphoserine modification. An intramembrane region (helical) is located at residues 103–123; it reads VLAIASCFCPVWPLNLIPLIF. Residues 124-150 lie on the Cytoplasmic side of the membrane; that stretch reads SIMSRSSVQQGDLDGARRLGRLARLLS. Residues 151 to 171 form a helical membrane-spanning segment; that stretch reads ITFIILGIVIIIVAVTVNFTV. Topologically, residues 172-173 are extracellular; it reads PK.

Belongs to the CD225/Dispanin family. Interacts with SLC2A4; the interaction is required for proper SLC2A4 reacycling after insulin stimulation. In terms of tissue distribution, expressed specifically in white and brown adipose tissues.

The protein localises to the cell membrane. It is found in the endomembrane system. Its subcellular location is the cytoplasm. The protein resides in the perinuclear region. In terms of biological role, regulates insulin-mediated adipose tissue glucose uptake and transport by modulation of SLC2A4 recycling. Not required for SLC2A4 membrane fusion upon an initial stimulus, but rather is necessary for proper protein recycling during prolonged insulin stimulation. In Mus musculus (Mouse), this protein is Trafficking regulator of GLUT4 1 (Trarg1).